The primary structure comprises 306 residues: Probable rRNA-processing protein EBP2 (306 aa).

Residue M1 is modified to N-acetylmethionine. 2 disordered regions span residues 1–20 (MDTP…LVTD) and 77–99 (VPEI…VDPE). At T3 the chain carries Phosphothreonine. S7, S9, S11, S13, and S16 each carry phosphoserine. A Glycyl lysine isopeptide (Lys-Gly) (interchain with G-Cter in SUMO2) cross-link involves residue K94. The stretch at 138-169 (AEMAKSDLQMQKIRQKLQTKQAAMERSEKAKQ) forms a coiled coil. Glycyl lysine isopeptide (Lys-Gly) (interchain with G-Cter in SUMO2) cross-links involve residues K179 and K218. The disordered stretch occupies residues 213 to 306 (LEGDQKPLAQ…TREKMKNRTH (94 aa)). S264 and S270 each carry phosphoserine. A compositionally biased stretch (basic residues) spans 274 to 306 (KTAHGRGLKRPGKKGSNKRPGKRTREKMKNRTH).

The protein belongs to the EBP2 family. As to quaternary structure, specifically interacts with EBV EBNA1. The EBNA1-EBP2 interaction is important for the stable segregation of EBV episomes during cell division. Interacts with WDR46. In terms of tissue distribution, ubiquitous.

It localises to the nucleus. The protein resides in the nucleolus. Required for the processing of the 27S pre-rRNA. The polypeptide is Probable rRNA-processing protein EBP2 (EBNA1BP2) (Homo sapiens (Human)).